Reading from the N-terminus, the 396-residue chain is Phosphoglycerate kinase (396 aa).

Substrate is bound by residues 21–23, Arg37, 60–63, Arg121, and Arg154; these read DFN and HLGR. ATP contacts are provided by residues Lys205, Gly296, Glu327, and 353 to 356; that span reads GGDS.

The protein belongs to the phosphoglycerate kinase family. In terms of assembly, monomer.

Its subcellular location is the cytoplasm. The catalysed reaction is (2R)-3-phosphoglycerate + ATP = (2R)-3-phospho-glyceroyl phosphate + ADP. It participates in carbohydrate degradation; glycolysis; pyruvate from D-glyceraldehyde 3-phosphate: step 2/5. This Anaeromyxobacter dehalogenans (strain 2CP-1 / ATCC BAA-258) protein is Phosphoglycerate kinase.